The primary structure comprises 353 residues: Probable dual-specificity RNA methyltransferase RlmN (353 aa).

The active-site Proton acceptor is the Glu-95. The Radical SAM core domain occupies 103–333; that stretch reads DGGRKTICIS…PILNRRSPGR (231 aa). Cys-110 and Cys-339 are disulfide-bonded. Positions 117, 121, and 124 each coordinate [4Fe-4S] cluster. Residues 164 to 165, Ser-196, 219 to 221, and Asn-296 contribute to the S-adenosyl-L-methionine site; these read GE and SLN. Cys-339 serves as the catalytic S-methylcysteine intermediate.

Belongs to the radical SAM superfamily. RlmN family. It depends on [4Fe-4S] cluster as a cofactor.

The protein resides in the cytoplasm. It carries out the reaction adenosine(2503) in 23S rRNA + 2 reduced [2Fe-2S]-[ferredoxin] + 2 S-adenosyl-L-methionine = 2-methyladenosine(2503) in 23S rRNA + 5'-deoxyadenosine + L-methionine + 2 oxidized [2Fe-2S]-[ferredoxin] + S-adenosyl-L-homocysteine. It catalyses the reaction adenosine(37) in tRNA + 2 reduced [2Fe-2S]-[ferredoxin] + 2 S-adenosyl-L-methionine = 2-methyladenosine(37) in tRNA + 5'-deoxyadenosine + L-methionine + 2 oxidized [2Fe-2S]-[ferredoxin] + S-adenosyl-L-homocysteine. Its function is as follows. Specifically methylates position 2 of adenine 2503 in 23S rRNA and position 2 of adenine 37 in tRNAs. The polypeptide is Probable dual-specificity RNA methyltransferase RlmN (Leptospira biflexa serovar Patoc (strain Patoc 1 / Ames)).